The following is a 213-amino-acid chain: ATP phosphoribosyltransferase (213 aa).

It belongs to the ATP phosphoribosyltransferase family. Short subfamily. In terms of assembly, heteromultimer composed of HisG and HisZ subunits.

The protein resides in the cytoplasm. The catalysed reaction is 1-(5-phospho-beta-D-ribosyl)-ATP + diphosphate = 5-phospho-alpha-D-ribose 1-diphosphate + ATP. It participates in amino-acid biosynthesis; L-histidine biosynthesis; L-histidine from 5-phospho-alpha-D-ribose 1-diphosphate: step 1/9. Its function is as follows. Catalyzes the condensation of ATP and 5-phosphoribose 1-diphosphate to form N'-(5'-phosphoribosyl)-ATP (PR-ATP). Has a crucial role in the pathway because the rate of histidine biosynthesis seems to be controlled primarily by regulation of HisG enzymatic activity. The protein is ATP phosphoribosyltransferase of Methylococcus capsulatus (strain ATCC 33009 / NCIMB 11132 / Bath).